We begin with the raw amino-acid sequence, 307 residues long: Nucleotide-binding protein Sca_0414 (307 aa).

ATP is bound at residue 19 to 26; the sequence is GMSGAGKS. A GTP-binding site is contributed by 70-73; sequence DLRG.

Belongs to the RapZ-like family.

In terms of biological role, displays ATPase and GTPase activities. This chain is Nucleotide-binding protein Sca_0414, found in Staphylococcus carnosus (strain TM300).